We begin with the raw amino-acid sequence, 243 residues long: Glucosamine-6-phosphate deaminase (243 aa).

Asp-67 (proton acceptor; for enolization step) is an active-site residue. Asn-137 acts as the For ring-opening step in catalysis. The active-site Proton acceptor; for ring-opening step is His-139. The active-site For ring-opening step is Glu-144.

Belongs to the glucosamine/galactosamine-6-phosphate isomerase family. NagB subfamily.

The catalysed reaction is alpha-D-glucosamine 6-phosphate + H2O = beta-D-fructose 6-phosphate + NH4(+). It participates in amino-sugar metabolism; N-acetylneuraminate degradation; D-fructose 6-phosphate from N-acetylneuraminate: step 5/5. Functionally, catalyzes the reversible isomerization-deamination of glucosamine 6-phosphate (GlcN6P) to form fructose 6-phosphate (Fru6P) and ammonium ion. This is Glucosamine-6-phosphate deaminase from Staphylococcus epidermidis (strain ATCC 35984 / DSM 28319 / BCRC 17069 / CCUG 31568 / BM 3577 / RP62A).